The following is a 155-amino-acid chain: Riboflavin synthase (155 aa).

This sequence belongs to the DMRL synthase family.

It catalyses the reaction 2 6,7-dimethyl-8-(1-D-ribityl)lumazine + H(+) = 5-amino-6-(D-ribitylamino)uracil + riboflavin. The protein operates within cofactor biosynthesis; riboflavin biosynthesis; riboflavin from 2-hydroxy-3-oxobutyl phosphate and 5-amino-6-(D-ribitylamino)uracil: step 2/2. The sequence is that of Riboflavin synthase (ribC) from Aeropyrum pernix (strain ATCC 700893 / DSM 11879 / JCM 9820 / NBRC 100138 / K1).